Consider the following 60-residue polypeptide: uncharacterized protein (60 aa).

A helical transmembrane segment spans residues 19–39 (LSIMCGCSIYFLLLVFILTFY).

It is found in the membrane. This is an uncharacterized protein from Saccharomyces cerevisiae (strain ATCC 204508 / S288c) (Baker's yeast).